A 210-amino-acid polypeptide reads, in one-letter code: Neurotrophin-4 (210 aa).

Residues 1–24 (MLPLPSCSLPILLLFLLPSVPIES) form the signal peptide. The propeptide occupies 25–80 (QPPPSTLPPFLAPEWDLLSPRVVLSRGAPAGPPLLFLLEAGAFRESAGAPANRSRR). N-linked (GlcNAc...) asparagine glycosylation occurs at asparagine 76. 3 disulfides stabilise this stretch: cysteine 97–cysteine 170, cysteine 141–cysteine 199, and cysteine 158–cysteine 201.

The protein belongs to the NGF-beta family. Highest levels in prostate, lower levels in thymus, placenta, and skeletal muscle. Expressed in embryonic and adult tissues.

It is found in the secreted. Its function is as follows. Target-derived survival factor for peripheral sensory sympathetic neurons. May promote ameloblast differentiation and subsequent reduction in proliferation of ameloblasts. The sequence is that of Neurotrophin-4 (NTF4) from Homo sapiens (Human).